The chain runs to 505 residues: Ribose import ATP-binding protein RbsA 2 (505 aa).

ABC transporter domains lie at 13–249 (LALE…VGRD) and 259–503 (VRAG…TGRA). 45–52 (GENGAGKS) lines the ATP pocket.

Belongs to the ABC transporter superfamily. Ribose importer (TC 3.A.1.2.1) family. In terms of assembly, the complex is composed of an ATP-binding protein (RbsA), two transmembrane proteins (RbsC) and a solute-binding protein (RbsB).

Its subcellular location is the cell membrane. The enzyme catalyses D-ribose(out) + ATP + H2O = D-ribose(in) + ADP + phosphate + H(+). Its function is as follows. Part of the ABC transporter complex RbsABC involved in ribose import. Responsible for energy coupling to the transport system. The sequence is that of Ribose import ATP-binding protein RbsA 2 from Streptomyces avermitilis (strain ATCC 31267 / DSM 46492 / JCM 5070 / NBRC 14893 / NCIMB 12804 / NRRL 8165 / MA-4680).